The following is a 735-amino-acid chain: Transcription factor RFX4 (735 aa).

Positions 27–59 are disordered; that stretch reads NKRYSSHTSLGNVSNDENEEKENNRASKPHSTP. A compositionally biased stretch (polar residues) spans 32–41; that stretch reads SHTSLGNVSN. The DNA-binding element occupies 44 to 126; it reads NEEKENNRAS…RRLGTRGQSK (83 aa). A DNA-binding region (RFX-type winged-helix) is located at residues 61–136; sequence TLQWLEENYE…YHYYGIAVKE (76 aa). The segment at 315–487 is necessary for dimerization; the sequence is RFSQILRRQT…NELMRAMKGE (173 aa). A disordered region spans residues 501 to 538; that stretch reads EATPPTPSPGPSFSPAKSATSVEVPPPSSPVSNPSPEY.

The protein belongs to the RFX family. In terms of assembly, homodimer. Heterodimer with RFX2 and RFX3. Binds DNA. Interacts with GPS2. As to expression, isoform 1: Brain-specific. Isoform 2: Testis-specific. Isoform 1: Highly expressed in the suprachiasmatic nucleus, the central pacemaker site of the circadian clock (at protein level).

The protein localises to the nucleus. Transcription factor that plays a role in early brain development. May activate transcription by interacting directly with the X-box. May activate transcription from CX3CL1 promoter through the X-box during brain development. May be required for neural tube ciliogenesis during embryogenesis. This is Transcription factor RFX4 (Rfx4) from Mus musculus (Mouse).